Here is a 441-residue protein sequence, read N- to C-terminus: Glutamate-1-semialdehyde 2,1-aminomutase (441 aa).

Lys-273 is modified (N6-(pyridoxal phosphate)lysine).

It belongs to the class-III pyridoxal-phosphate-dependent aminotransferase family. HemL subfamily. Pyridoxal 5'-phosphate serves as cofactor.

The protein localises to the cytoplasm. It catalyses the reaction (S)-4-amino-5-oxopentanoate = 5-aminolevulinate. The protein operates within porphyrin-containing compound metabolism; protoporphyrin-IX biosynthesis; 5-aminolevulinate from L-glutamyl-tRNA(Glu): step 2/2. The polypeptide is Glutamate-1-semialdehyde 2,1-aminomutase (Pyrobaculum calidifontis (strain DSM 21063 / JCM 11548 / VA1)).